Here is a 598-residue protein sequence, read N- to C-terminus: Elongation factor 4 (598 aa).

A tr-type G domain is found at 2–183 (KHIRNFCIIA…AIIEKIPHPK (182 aa)). GTP is bound by residues 14–19 (DHGKST) and 130–133 (NKVD).

This sequence belongs to the TRAFAC class translation factor GTPase superfamily. Classic translation factor GTPase family. LepA subfamily.

The protein localises to the cell inner membrane. It carries out the reaction GTP + H2O = GDP + phosphate + H(+). In terms of biological role, required for accurate and efficient protein synthesis under certain stress conditions. May act as a fidelity factor of the translation reaction, by catalyzing a one-codon backward translocation of tRNAs on improperly translocated ribosomes. Back-translocation proceeds from a post-translocation (POST) complex to a pre-translocation (PRE) complex, thus giving elongation factor G a second chance to translocate the tRNAs correctly. Binds to ribosomes in a GTP-dependent manner. This chain is Elongation factor 4, found in Flavobacterium psychrophilum (strain ATCC 49511 / DSM 21280 / CIP 103535 / JIP02/86).